Consider the following 568-residue polypeptide: Kelch-like protein 12 (568 aa).

Positions 33 to 100 (CDVTLRVEQK…VYTETVHVTV (68 aa)) constitute a BTB domain. A BACK domain is found at 135–236 (CLGIRDFAET…LTPRYITDVI (102 aa)). Kelch repeat units follow at residues 282–329 (VLLV…SLHD), 331–379 (IYVI…TLGD), 380–426 (MIYV…VASG), 427–473 (IIYC…LLND), 475–520 (IYVV…VLRG), and 522–567 (LYAI…VLRE). The tract at residues 405 to 568 (QWSMLGDMQT…DAGVCVLREK (164 aa)) is interaction with DVL3.

As to quaternary structure, component of the BCR(KLHL12) E3 ubiquitin ligase complex, at least composed of CUL3 and KLHL12 and RBX1. This complex interacts with DVL3 upon activation of the Wnt signaling pathway by WNT3A. Interacts with DRD4, KLHL2 and SEC31A. Interacts with PEF1 and PDCD6/ALG-2; interaction takes place in response to cytosolic calcium increase and leads to bridge together the BCR(KLHL12) complex and SEC31 (SEC31A or SEC31B). Post-translationally, ubiquitinated by the SCF(FBXL17) complex, leading to its degradation by the proteasome: ubiquitination by the SCF(FBXL17) complex takes place when aberrant BTB domain dimers are formed.

It is found in the cytoplasmic vesicle. It localises to the COPII-coated vesicle. It participates in protein modification; protein ubiquitination. In terms of biological role, substrate-specific adapter of a BCR (BTB-CUL3-RBX1) E3 ubiquitin ligase complex that acts as a negative regulator of Wnt signaling pathway and ER-Golgi transport. The BCR(KLHL12) complex is involved in ER-Golgi transport by regulating the size of COPII coats, thereby playing a key role in collagen export, which is required for embryonic stem (ES) cells division: BCR(KLHL12) acts by mediating monoubiquitination of SEC31 (SEC31A or SEC31B). The BCR(KLHL12) complex is also involved in neural crest specification: in response to cytosolic calcium increase, interacts with the heterodimer formed with PEF1 and PDCD6/ALG-2, leading to bridge together the BCR(KLHL12) complex and SEC31 (SEC31A or SEC31B), promoting monoubiquitination of SEC31 and subsequent collagen export. As part of the BCR(KLHL12) complex, also acts as a negative regulator of the Wnt signaling pathway by mediating ubiquitination and subsequent proteolysis of DVL3. The BCR(KLHL12) complex also mediates polyubiquitination of DRD4 and PEF1, without leading to degradation of these proteins. This Rattus norvegicus (Rat) protein is Kelch-like protein 12 (Klhl12).